We begin with the raw amino-acid sequence, 287 residues long: Agamous-like MADS-box protein AGL53 (287 aa).

Residues 30–78 (STAKKTTNLSMREQTMFKKALELSTLCNIDVCVIYYGRDGKLIKTWPED) enclose the MADS-box domain. A disordered region spans residues 151 to 171 (EFGQTRAVSSTTNPLSPPPSL).

In terms of assembly, interacts with MEE14/CBP1.

The protein resides in the nucleus. Its function is as follows. Probable transcription factor that may function in the maintenance of the proper function of the central cell in pollen tube attraction. The polypeptide is Agamous-like MADS-box protein AGL53 (Arabidopsis thaliana (Mouse-ear cress)).